The primary structure comprises 364 residues: Anionic peroxidase (364 aa).

The first 20 residues, 1 to 20, serve as a signal peptide directing secretion; that stretch reads MASFMKQLSLVLSFIALALA. A propeptide spanning residues 21 to 66 is cleaved from the precursor; sequence GCAVYQNTQTAMKDQLKVTPTWLDNTLKSTNLLSLGLGKPSGGKLG. Histidine 99 functions as the Proton acceptor in the catalytic mechanism. Positions 100, 103, 105, and 107 each coordinate Ca(2+). Cysteines 101 and 106 form a disulfide. Asparagine 113, asparagine 188, asparagine 202, and asparagine 216 each carry an N-linked (GlcNAc...) asparagine glycan. 2 cysteine pairs are disulfide-bonded: cysteine 155/cysteine 343 and cysteine 234/cysteine 255. Position 227 (histidine 227) interacts with heme b. Ca(2+) is bound at residue threonine 228. 2 N-linked (GlcNAc...) asparagine glycosylation sites follow: asparagine 254 and asparagine 260. Ca(2+)-binding residues include aspartate 268, threonine 270, and aspartate 275. Residue asparagine 299 is glycosylated (N-linked (GlcNAc...) asparagine).

Belongs to the peroxidase family. Classical plant (class III) peroxidase subfamily. It depends on Ca(2+) as a cofactor. Heme b is required as a cofactor. In terms of tissue distribution, highly expressed in suspension cultured cells and calli. Weak expression also found in the stems of intact plants. No expression in leaf, tuberous root and non-tuberous root.

It is found in the secreted. The enzyme catalyses 2 a phenolic donor + H2O2 = 2 a phenolic radical donor + 2 H2O. Functionally, removal of H(2)O(2), oxidation of toxic reductants, biosynthesis and degradation of lignin, suberization, auxin catabolism, response to environmental stresses such as wounding, pathogen attack and oxidative stress. These functions might be dependent on each isozyme/isoform in each plant tissue. May contribute to protection against cold-induced oxidative stress. In Ipomoea batatas (Sweet potato), this protein is Anionic peroxidase.